A 77-amino-acid chain; its full sequence is Distinctin-like peptide (77 aa).

Positions 1–19 are cleaved as a signal peptide; it reads LKKSLFLVTFLALVPLFLC. The propeptide occupies 20 to 39; that stretch reads EEEKREEENEERQDDDQSEE.

The protein belongs to the frog skin active peptide (FSAP) family. As to expression, expressed by the skin glands.

The protein localises to the secreted. In terms of biological role, has antimicrobial activity. This chain is Distinctin-like peptide, found in Pithecopus azureus (Orange-legged monkey tree frog).